A 155-amino-acid polypeptide reads, in one-letter code: Myosin light chain alkali (155 aa).

EF-hand domains lie at 7–41 (REVENVEFVFEVMGSPGEGIDAFDLGDALRALNLN) and 80–115 (GCYEDFIECLKLYDKEENGTMLLAELQHALLALGES).

As to quaternary structure, myosin is a hexamer of 2 heavy chains and 4 light chains.

This is Myosin light chain alkali (Mlc1) from Drosophila virilis (Fruit fly).